The chain runs to 545 residues: CTP synthase (545 aa).

The tract at residues 1–266 (MTTNYIFVTG…DDYICKRFSL (266 aa)) is amidoligase domain. Serine 14 is a CTP binding site. Serine 14 is a binding site for UTP. Residues 15-20 (SLGKGI) and aspartate 72 each bind ATP. Positions 72 and 140 each coordinate Mg(2+). Residues 147–149 (DIE), 187–192 (KTKPTQ), and lysine 223 each bind CTP. UTP-binding positions include 187 to 192 (KTKPTQ) and lysine 223. Residue 239–241 (KDV) coordinates ATP. Positions 291 to 542 (TIGMVGKYIE…VKAASEYQKR (252 aa)) constitute a Glutamine amidotransferase type-1 domain. Residue glycine 352 coordinates L-glutamine. Cysteine 379 (nucleophile; for glutamine hydrolysis) is an active-site residue. L-glutamine is bound by residues 380–383 (LGMQ), glutamate 403, and arginine 470. Residues histidine 515 and glutamate 517 contribute to the active site.

This sequence belongs to the CTP synthase family. In terms of assembly, homotetramer.

The catalysed reaction is UTP + L-glutamine + ATP + H2O = CTP + L-glutamate + ADP + phosphate + 2 H(+). It carries out the reaction L-glutamine + H2O = L-glutamate + NH4(+). The enzyme catalyses UTP + NH4(+) + ATP = CTP + ADP + phosphate + 2 H(+). It functions in the pathway pyrimidine metabolism; CTP biosynthesis via de novo pathway; CTP from UDP: step 2/2. Allosterically activated by GTP, when glutamine is the substrate; GTP has no effect on the reaction when ammonia is the substrate. The allosteric effector GTP functions by stabilizing the protein conformation that binds the tetrahedral intermediate(s) formed during glutamine hydrolysis. Inhibited by the product CTP, via allosteric rather than competitive inhibition. Its function is as follows. Catalyzes the ATP-dependent amination of UTP to CTP with either L-glutamine or ammonia as the source of nitrogen. Regulates intracellular CTP levels through interactions with the four ribonucleotide triphosphates. This chain is CTP synthase, found in Klebsiella pneumoniae (strain 342).